The chain runs to 71 residues: Small ribosomal subunit protein bS21 (71 aa).

Over residues 48–59 (KAAAAVKRHAKK) the composition is skewed to basic residues. The tract at residues 48–71 (KAAAAVKRHAKKVQRENRKFQRLY) is disordered. Basic and acidic residues predominate over residues 60–71 (VQRENRKFQRLY).

This sequence belongs to the bacterial ribosomal protein bS21 family.

This chain is Small ribosomal subunit protein bS21, found in Teredinibacter turnerae (strain ATCC 39867 / T7901).